Consider the following 249-residue polypeptide: Ciliogenesis and planar polarity effector 2 (249 aa).

The tract at residues 46 to 249 (PADVAAYKVF…VIAGLVGGAE (204 aa)) is small GTPase-like. Residues 58–65 (GKSGVGKT) and 171–174 (TKLD) each bind GTP.

Belongs to the small GTPase superfamily. Rab family. In terms of assembly, interacts with fuz.

Its subcellular location is the cytoplasm. The protein resides in the cytoskeleton. It localises to the cilium basal body. Potential effector of the planar cell polarity signaling pathway. Plays a role in targeted membrane trafficking most probably at the level of vesicle fusion with membranes. Involved in cilium biogenesis by regulating the transport of cargo proteins to the basal body and to the apical tips of cilia. More generally involved in exocytosis in secretory cells. The sequence is that of Ciliogenesis and planar polarity effector 2 from Xenopus laevis (African clawed frog).